Consider the following 146-residue polypeptide: D-aminoacyl-tRNA deacylase (146 aa).

The short motif at 137-138 (GP) is the Gly-cisPro motif, important for rejection of L-amino acids element.

It belongs to the DTD family. As to quaternary structure, homodimer.

The protein localises to the cytoplasm. It catalyses the reaction glycyl-tRNA(Ala) + H2O = tRNA(Ala) + glycine + H(+). It carries out the reaction a D-aminoacyl-tRNA + H2O = a tRNA + a D-alpha-amino acid + H(+). In terms of biological role, an aminoacyl-tRNA editing enzyme that deacylates mischarged D-aminoacyl-tRNAs. Also deacylates mischarged glycyl-tRNA(Ala), protecting cells against glycine mischarging by AlaRS. Acts via tRNA-based rather than protein-based catalysis; rejects L-amino acids rather than detecting D-amino acids in the active site. By recycling D-aminoacyl-tRNA to D-amino acids and free tRNA molecules, this enzyme counteracts the toxicity associated with the formation of D-aminoacyl-tRNA entities in vivo and helps enforce protein L-homochirality. The polypeptide is D-aminoacyl-tRNA deacylase (Cellvibrio japonicus (strain Ueda107) (Pseudomonas fluorescens subsp. cellulosa)).